The sequence spans 310 residues: Ribonuclease Z (310 aa).

The Zn(2+) site is built by H63, H65, D67, H68, H141, D212, and H270. Catalysis depends on D67, which acts as the Proton acceptor.

Belongs to the RNase Z family. Homodimer. Requires Zn(2+) as cofactor.

The catalysed reaction is Endonucleolytic cleavage of RNA, removing extra 3' nucleotides from tRNA precursor, generating 3' termini of tRNAs. A 3'-hydroxy group is left at the tRNA terminus and a 5'-phosphoryl group is left at the trailer molecule.. In terms of biological role, zinc phosphodiesterase, which displays some tRNA 3'-processing endonuclease activity. Probably involved in tRNA maturation, by removing a 3'-trailer from precursor tRNA. This is Ribonuclease Z from Limosilactobacillus fermentum (strain NBRC 3956 / LMG 18251) (Lactobacillus fermentum).